The primary structure comprises 95 residues: Small ribosomal subunit protein bS18 (95 aa).

This sequence belongs to the bacterial ribosomal protein bS18 family. In terms of assembly, part of the 30S ribosomal subunit. Forms a tight heterodimer with protein bS6.

Its function is as follows. Binds as a heterodimer with protein bS6 to the central domain of the 16S rRNA, where it helps stabilize the platform of the 30S subunit. The protein is Small ribosomal subunit protein bS18 of Ehrlichia canis (strain Jake).